A 396-amino-acid chain; its full sequence is ATP-dependent RNA helicase eIF4A (396 aa).

The Q motif signature appears at 23–51; sequence YEFDDMNLNEKLLRGVFGYGFNKPSAIQQ. A Helicase ATP-binding domain is found at 54-223; that stretch reads IMPIIEGNDV…AKFMQNPVRI (170 aa). 67 to 74 contributes to the ATP binding site; that stretch reads AQSGTGKT. The DEAD box motif lies at 171-174; the sequence is DEAD. In terms of domain architecture, Helicase C-terminal spans 234–395; sequence GIKQFYVNVE…ELPSDIGTLF (162 aa).

The protein belongs to the DEAD box helicase family. eIF4A subfamily. As to quaternary structure, component of the eIF4F complex, which composition varies with external and internal environmental conditions. It is composed of at least eIF4A, eIF4E and eIF4G.

The protein localises to the cytoplasm. The enzyme catalyses ATP + H2O = ADP + phosphate + H(+). In terms of biological role, ATP-dependent RNA helicase which is a subunit of the eIF4F complex involved in cap recognition and is required for mRNA binding to ribosome. In the current model of translation initiation, eIF4A unwinds RNA secondary structures in the 5'-UTR of mRNAs which is necessary to allow efficient binding of the small ribosomal subunit, and subsequent scanning for the initiator codon. This chain is ATP-dependent RNA helicase eIF4A (TIF1), found in Candida glabrata (strain ATCC 2001 / BCRC 20586 / JCM 3761 / NBRC 0622 / NRRL Y-65 / CBS 138) (Yeast).